Reading from the N-terminus, the 214-residue chain is CASP-like protein 0U1 (214 aa).

The Cytoplasmic portion of the chain corresponds to M1–G82. A helical membrane pass occupies residues V83–F103. Residues S104–E112 are Extracellular-facing. The chain crosses the membrane as a helical span at residues F113–S133. The Cytoplasmic portion of the chain corresponds to C134–K153. A helical membrane pass occupies residues A154–F174. The Extracellular segment spans residues K175–P214. The tract at residues R194 to P214 is disordered.

It belongs to the Casparian strip membrane proteins (CASP) family. Homodimer and heterodimers.

It is found in the cell membrane. The polypeptide is CASP-like protein 0U1 (Ostreococcus tauri).